Reading from the N-terminus, the 159-residue chain is Cyclic pyranopterin monophosphate synthase (159 aa).

Substrate is bound by residues 75 to 77 (LCH) and 113 to 114 (ME). D128 is an active-site residue.

The protein belongs to the MoaC family. Homohexamer; trimer of dimers.

It carries out the reaction (8S)-3',8-cyclo-7,8-dihydroguanosine 5'-triphosphate = cyclic pyranopterin phosphate + diphosphate. It participates in cofactor biosynthesis; molybdopterin biosynthesis. In terms of biological role, catalyzes the conversion of (8S)-3',8-cyclo-7,8-dihydroguanosine 5'-triphosphate to cyclic pyranopterin monophosphate (cPMP). The chain is Cyclic pyranopterin monophosphate synthase from Cereibacter sphaeroides (strain ATCC 17029 / ATH 2.4.9) (Rhodobacter sphaeroides).